Here is a 504-residue protein sequence, read N- to C-terminus: Prenylcysteine oxidase 1 (504 aa).

An N-terminal signal peptide occupies residues 1–28; the sequence is MGRFAATLVGSLFGLGLLLCGLGRLASA. Residues N196, N322, and N352 are each glycosylated (N-linked (GlcNAc...) asparagine).

It belongs to the prenylcysteine oxidase family. FAD serves as cofactor. As to expression, expressed mainly in cerebrum.

It is found in the lysosome. It carries out the reaction an S-polyprenyl-L-cysteine + O2 + H2O = a polyprenal + L-cysteine + H2O2. It catalyses the reaction S-(2E,6E)-farnesyl-L-cysteine + O2 + H2O = (2E,6E)-farnesal + L-cysteine + H2O2. The enzyme catalyses [(2E,6E,10E)-geranylgeranyl]-L-cysteine + O2 + H2O = (2E,6E,10E)-geranylgeranial + L-cysteine + H2O2. Prenylcysteine oxidase that cleaves the thioether bond of prenyl-L-cysteines, such as farnesylcysteine and geranylgeranylcysteine. Only active against free prenylcysteines and not prenylcysteine residues within prenylated proteins or peptides. Involved in the final step in the degradation of prenylated proteins, by degrading prenylcysteines after the protein has been degraded. This chain is Prenylcysteine oxidase 1, found in Rattus norvegicus (Rat).